The chain runs to 966 residues: MMRLSRNLRRCRWLVFTGWLLALVPAVYLAMTQSGNLTGGGFEVAGSQSLLVHDQLDAHYPDRGAPALALVAAPRPDASYQDIDNAVALLRQIASELPGVTEAPNPTQRPPQPDRPYVVSLRLDARNAGTSDVAKKLRDRIGVKGDQSGQTANGKVRLYVIGQGALSAAAAANTKHDIANAERWNLPIILMVLVAVFGSLAAAAIPLALAVCTVVITMGLVFVLSMHTTMSVFVTSTVSMFGIALAVDYSLFILMRYREELRCGRRPPDAVDAAMATSGLAVVLSGMTVIASLTGIYLINTPALRSMATGAILAVAVAMLTSATLTPAVLATFARAAAKRSALVHWSRRPASTQSWFWSRWVGWVMRRPWITALAASTVLLVMAAPATLMVLGNSLLRQFDSSHEIRTGAAAAAQALGPGALGPVQVLVRFDAGGASAPEHSQTIAAIRHRIAQAPNVVSVAPPRFADDNGSALLSAVLSVDPEDLGARDTITWMRTQLPRVAGAAQVDVGGPTALIKDFDDRVSATQPLVLVFVAVIAFLMLLISIRSVFLAFKGVLMTLLSVAAAYGSLVMVFQWGWARGLGFPALHSIDSTVPPLVLAMTFGLSMDYEIFLLTRIRERFLQTGQTRDAVAYGVRTSARTITSAALIMIAVFCGFAFAGMPLVAEIGVACAVAIAVDATVVRLVLVPALMAMFDRWNWWLPRWLAHILPSVDFDRPLPKVDLGDVVVIPDDFAAAIPPSADVRMVLKSAAKLKRLAPDAICVTDPLAFTGCGCDGKALDQVQLAYRNGIARAISWGQRPVHPVTVWRKRLAVALDALQTTTWECGGVQTHRAGPGYRRRSPVETTNVALPTGDRLQIPTGAETLRFKGYLIMSRNSSHDYADFADLVDTMAPETAAAVLAGMDRYYSCQAPGRQWMATQLVGRLADPQPSDLGDQSPGADAQAKWEEVRRRCLSVAVAMLEEAR.

12 helical membrane-spanning segments follow: residues 13 to 33, 188 to 208, 214 to 234, 235 to 255, 279 to 299, 311 to 331, 373 to 393, 527 to 547, 557 to 577, 595 to 615, 646 to 666, and 668 to 688; these read WLVF…AMTQ, IILM…IPLA, VVIT…SVFV, TSTV…FILM, GLAV…IYLI, AILA…AVLA, ALAA…MVLG, TQPL…LISI, VLMT…VFQW, VPPL…IFLL, AALI…PLVA, and IGVA…LVLV.

It belongs to the resistance-nodulation-cell division (RND) (TC 2.A.6) family. MmpL subfamily.

Its subcellular location is the cell membrane. The polypeptide is Probable transport protein MmpL11 (mmpL11) (Mycobacterium bovis (strain ATCC BAA-935 / AF2122/97)).